Reading from the N-terminus, the 246-residue chain is Ribonuclease 3 (246 aa).

Residues 10 to 135 (LENFLTLNNI…FVAAIYLDLG (126 aa)) form the RNase III domain. Glu-50 provides a ligand contact to Mg(2+). Asp-54 is an active-site residue. Mg(2+)-binding residues include Asp-121 and Glu-124. Glu-124 is an active-site residue. The DRBM domain maps to 161 to 230 (DPKSSFQEYI…ATRALETLKA (70 aa)).

The protein belongs to the ribonuclease III family. Homodimer. Mg(2+) is required as a cofactor.

It is found in the cytoplasm. The catalysed reaction is Endonucleolytic cleavage to 5'-phosphomonoester.. Functionally, digests double-stranded RNA. Involved in the processing of primary rRNA transcript to yield the immediate precursors to the large and small rRNAs (23S and 16S). Processes some mRNAs, and tRNAs when they are encoded in the rRNA operon. Processes pre-crRNA and tracrRNA of type II CRISPR loci if present in the organism. The polypeptide is Ribonuclease 3 (Mycoplasma mobile (strain ATCC 43663 / 163K / NCTC 11711) (Mesomycoplasma mobile)).